The chain runs to 490 residues: Cysteine--tRNA ligase (490 aa).

C31 provides a ligand contact to Zn(2+). The 'HIGH' region signature appears at 33 to 43 (PTVYGDAHLGH). Residues C226, H251, and E255 each contribute to the Zn(2+) site. Residues 283 to 287 (KMGKS) carry the 'KMSKS' region motif. ATP is bound at residue K286.

It belongs to the class-I aminoacyl-tRNA synthetase family. In terms of assembly, monomer. Zn(2+) serves as cofactor.

The protein resides in the cytoplasm. It carries out the reaction tRNA(Cys) + L-cysteine + ATP = L-cysteinyl-tRNA(Cys) + AMP + diphosphate. In Porphyromonas gingivalis (strain ATCC BAA-308 / W83), this protein is Cysteine--tRNA ligase.